The chain runs to 407 residues: Queuine tRNA-ribosyltransferase-like protein (407 aa).

It belongs to the queuine tRNA-ribosyltransferase family.

In Plasmodium falciparum (isolate 3D7), this protein is Queuine tRNA-ribosyltransferase-like protein.